The chain runs to 394 residues: 5-azacytidine-induced protein 2 (394 aa).

Positions 1-197 (MDALVEDDIC…IELRKAKQTD (197 aa)) are homodimerization. 2 coiled-coil regions span residues 40-76 (ALVTAYEDIKKRLKDSEKENSLLKKRIRFLEEKLIAR) and 102-196 (DRDN…AKQT). An interaction with TBK1 and IKBKE region spans residues 216–257 (SDNMQHAYWELKREMSNLHLVTQVQAELLRKLKTSTAIKKAC). Phosphoserine occurs at positions 318 and 355. Residues 355 to 379 (SPPKSSETAFGETKSKTLPLPNLPP) form a disordered region.

As to quaternary structure, homodimer. Interacts with IKBKE, TBK1 and TICAM1. Interacts with TAX1BP1. Interacts with CALCOCO2. Post-translationally, ubiquitinated via 'Lys-48'-linked polyubiquitination by TRIM38, leading to its degradation.

It is found in the cytoplasm. Its function is as follows. Adapter protein which binds TBK1 and IKBKE playing a role in antiviral innate immunity. Activates serine/threonine-protein kinase TBK1 and facilitates its oligomerization. Enhances the phosphorylation of NF-kappa-B p65 subunit RELA by TBK1. Promotes TBK1-induced as well as TNF-alpha or PMA-induced activation of NF-kappa-B. Participates in IFNB promoter activation via TICAM1. The polypeptide is 5-azacytidine-induced protein 2 (AZI2) (Macaca fascicularis (Crab-eating macaque)).